The primary structure comprises 143 residues: Peptide methionine sulfoxide reductase MsrB (143 aa).

The region spanning 16–139 (DAELRRRLTP…NSAALNFEAK (124 aa)) is the MsrB domain. Positions 55, 58, 104, and 107 each coordinate Zn(2+). C128 functions as the Nucleophile in the catalytic mechanism.

The protein belongs to the MsrB Met sulfoxide reductase family. It depends on Zn(2+) as a cofactor.

It catalyses the reaction L-methionyl-[protein] + [thioredoxin]-disulfide + H2O = L-methionyl-(R)-S-oxide-[protein] + [thioredoxin]-dithiol. The polypeptide is Peptide methionine sulfoxide reductase MsrB (Burkholderia mallei (strain NCTC 10229)).